The sequence spans 292 residues: Brix domain-containing protein ZK795.3 (292 aa).

The 182-residue stretch at 78-259 (PKIVITTSRD…PYQIKLGTLE (182 aa)) folds into the Brix domain.

This chain is Brix domain-containing protein ZK795.3, found in Caenorhabditis elegans.